The sequence spans 545 residues: MFVLNEFTRRGFLGTAAAVGGTTVVTTALGGAPAAQAAVPEAADGGACGARTALVKVDRVDRRYQDLVTRGFNGRFRGRPDVVYVVHTADQVVDAVNQAMAAGQRIAVRSGGHCFEGFVDDPAVRAVIDMSQMRQVFYDSGKRAFAVEPGATLGETYRALYLDWGVTIPAGVCPQVGVGGHVLGGGYGPLSRRDGVVADHLYAVEVVVVDASGRARKVVATSAADDPNRELWWAHTGGGGGNFGIVTRYWFRTPGATGTDPSQLLPKAPTSTLRHIVTWDWSALTEEAFTRIIDNHGAWHQSNSAAGTPYASMHSVFYLNSRAAGQILLDIQIDGGLDGAEALLNDFVAAVNEGTGVEPAVQRSTEPWLRATLANKFDTGGFDRTKSKGAYLRKPWTAAQAATLYRHLSADSQVWGEVSLYSYGGKVNSVPETATATAQRDSIIKVWMSATWMDPAHDDANLAWIREIYREIFATTGGVPVPDDRTEGTFINYPDVDLVDERWNTSGVPWYTLYYKGNYPRLQKVKARWDPRDVFRHALSVRPPG.

A signal peptide (tat-type signal) is located at residues 1–43 (MFVLNEFTRRGFLGTAAAVGGTTVVTTALGGAPAAQAAVPEAA). In terms of domain architecture, FAD-binding PCMH-type spans 76-256 (FRGRPDVVYV…TRYWFRTPGA (181 aa)). The 6-(S-cysteinyl)-8alpha-(pros-histidyl)-FAD (His-Cys) cross-link spans 113-173 (HCFEGFVDDP…WGVTIPAGVC (61 aa)). Residue Tyr-421 is the Proton acceptor of the active site. Aclacinomycin Y is bound at residue Thr-451. Asn-492 is a binding site for FAD. The active-site Proton acceptor is Tyr-493. Residue Tyr-493 coordinates aclacinomycin Y.

Belongs to the oxygen-dependent FAD-linked oxidoreductase family. Homotetramer; dimer of dimers. FAD is required as a cofactor. In terms of processing, predicted to be exported by the Tat system. The position of the signal peptide cleavage has been experimentally proven. Post-translationally, the FAD cofactor is bound via a bicovalent 6-S-cysteinyl, 8alpha-N1-histidyl FAD linkage.

The enzyme catalyses aclacinomycin N + O2 = aclacinomycin A + H2O2. It carries out the reaction aclacinomycin A + O2 = aclacinomycin Y + H2O2. With respect to regulation, inhibited by ascorbic acid and iron ion. Involved in the modification of the terminal sugar residues in the last two steps in the biosynthesis of polyketide antibiotics of the aclacinomycin group. In the first reaction, it catalyzes the oxidation of the hydroxyl group at carbon C4 of the L-rhodinose terminal sugar moiety of aclacinomycin N (AclN) to a keto group, modifying the sugar to cinerulose A and generating aclacinomycin A (AclA). In the second reaction, it catalyzes the elimination of two hydrogen atoms from cinerulose A, leading to a double bond between carbon atoms C2 and C3 and the generation of the L-aculose terminal sugar moiety of aclacinomycin Y (AclY). It can also use aclacinomycin analogs, epsilon-pyrromycinone glycosides, rhodirubins (A, B, C and E) and all triglycosides containing L-cinerulose, L-rhodinose or 2-deoxy-L-fucose as terminal sugar. This Streptomyces galilaeus protein is Aclacinomycin-N/aclacinomycin-A oxidase.